The sequence spans 438 residues: Coenzyme A disulfide reductase (438 aa).

8 to 33 (GAVAGGATCASQIRRLDKESDIIIFE) contributes to the FAD binding site. Substrate is bound by residues Thr-15, Gln-19, Arg-22, Ser-39, and Asn-42. Cys-43 functions as the Nucleophile in the catalytic mechanism. The Redox-active role is filled by Cys-43. Lys-71 serves as a coordination point for substrate. 151–166 (VLVIGAGYVSLEVLEN) provides a ligand contact to NADP(+). Residue 267-277 (TNVPNIYAIGD) participates in FAD binding. His-299 serves as a coordination point for substrate. Tyr-419 provides a ligand contact to FAD. Lys-427 provides a ligand contact to substrate.

Belongs to the class-III pyridine nucleotide-disulfide oxidoreductase family. In terms of assembly, homodimer. It depends on FAD as a cofactor.

The catalysed reaction is NADP(+) + 2 CoA = CoA-disulfide + NADPH + H(+). Its function is as follows. Catalyzes specifically the NADPH-dependent reduction of coenzyme A disulfide. This Staphylococcus aureus (strain JH1) protein is Coenzyme A disulfide reductase.